The chain runs to 339 residues: Flap endonuclease 1 (339 aa).

Positions 1-99 (MGVNLKEIVD…VAWEKRKKHK (99 aa)) are N-domain. Mg(2+)-binding residues include Asp29, Asp81, Glu153, Glu155, Asp174, Asp176, and Asp237. An I-domain region spans residues 117-258 (EAIKYAKSLG…TAIEIVKRFG (142 aa)). Residues 329–337 (NQKTLFSFF) are interaction with PCNA.

It belongs to the XPG/RAD2 endonuclease family. FEN1 subfamily. As to quaternary structure, interacts with PCNA. PCNA stimulates the nuclease activity without altering cleavage specificity. It depends on Mg(2+) as a cofactor.

Functionally, structure-specific nuclease with 5'-flap endonuclease and 5'-3' exonuclease activities involved in DNA replication and repair. During DNA replication, cleaves the 5'-overhanging flap structure that is generated by displacement synthesis when DNA polymerase encounters the 5'-end of a downstream Okazaki fragment. Binds the unpaired 3'-DNA end and kinks the DNA to facilitate 5' cleavage specificity. Cleaves one nucleotide into the double-stranded DNA from the junction in flap DNA, leaving a nick for ligation. Also involved in the base excision repair (BER) pathway. Acts as a genome stabilization factor that prevents flaps from equilibrating into structures that lead to duplications and deletions. Also possesses 5'-3' exonuclease activity on nicked or gapped double-stranded DNA. In Nanoarchaeum equitans (strain Kin4-M), this protein is Flap endonuclease 1.